The primary structure comprises 167 residues: Chorion class CB protein PC404 (167 aa).

The tract at residues Ile1–Ala55 is left arm. The central domain stretch occupies residues Ala56–Glu126. Positions Thr127–Tyr167 are right arm.

It belongs to the chorion protein family.

Functionally, this protein is one of many from the eggshell of the silk moth. This is Chorion class CB protein PC404 from Antheraea polyphemus (Polyphemus moth).